Here is a 690-residue protein sequence, read N- to C-terminus: Iron-regulated transcriptional activator AFT1 (690 aa).

The disordered stretch occupies residues 1 to 21; the sequence is MEGFNPADIEHASPINSSDSH. A Zn(2+)-binding site is contributed by Asp110. DNA-binding residues include Lys111, Lys115, Ile131, Glu132, Arg133, Ser134, Asp135, and Lys138. Cys143 is a binding site for Zn(2+). The span at 148–159 shows a compositional bias: basic residues; sequence RGRNARRKRKDK. The tract at residues 148–205 is disordered; it reads RGRNARRKRKDKPKGQDHEDEKSKINDDELEYASPSNATVTNGPQTSPDQTSSIKPKK. Over residues 160 to 174 the composition is skewed to basic and acidic residues; that stretch reads PKGQDHEDEKSKIND. Polar residues predominate over residues 181–201; it reads SPSNATVTNGPQTSPDQTSSI. Cys215 serves as a coordination point for Zn(2+). DNA is bound at residue Lys226. Zn(2+)-binding residues include His239 and His241. Asn263 provides a ligand contact to DNA. The CDC [2Fe-2S] cluster binding motif motif lies at 291–293; that stretch reads CDC. Disordered stretches follow at residues 335–357 and 612–655; these read PCLPSVNNTGSINTNNVRKPKSQ and SSNE…VQKD. The segment covering 339–351 has biased composition (polar residues); the sequence is SVNNTGSINTNNV. The span at 621–638 shows a compositional bias: low complexity; that stretch reads HQYGPQQQPPQQLQYHQN. Residues 639-649 show a composition bias toward basic and acidic residues; sequence QPHDGHNHEQH.

As to quaternary structure, homodimer. Dimerization decreases the DNA-binding activity.

The protein localises to the nucleus. With respect to regulation, dimerization via the binding of Fe(2+) or a [2Fe-2S] cluster decreases the DNA-binding activity. Transcription factor that activates the genes for FRE1, FRE2 and FET3 in response to iron deprivationand thereby plays a central role in iron homeostasis. Also required for the expression of LSO1. Recognizes the consensus iron-responsive element (Fe-RE) sequence 5'-CACCC-3' in the promoters of target genes. Iron could interact directly with AFT1 and inhibits its activity. In high iron condition, the presence of Fe(2+) or [2Fe-2S] cluster leads to dimerization, which in turn leads to a decrease in DNA affinity. The protein is Iron-regulated transcriptional activator AFT1 of Saccharomyces cerevisiae (strain ATCC 204508 / S288c) (Baker's yeast).